Here is a 366-residue protein sequence, read N- to C-terminus: Prostaglandin F2-alpha receptor (366 aa).

Over 1-31 the chain is Extracellular; the sequence is MSINSSKQPASSAAGLIANTTCQTENRLSVF. Residues N4 and N19 are each glycosylated (N-linked (GlcNAc...) asparagine). Residues 32–55 traverse the membrane as a helical segment; sequence FSIIFMTVGIVSNSLAIAILMKAY. Over 56 to 69 the chain is Cytoplasmic; it reads QRFRRKSKASFLLL. A helical transmembrane segment spans residues 70 to 90; that stretch reads ASGLVITDFFGHLINGGIAVF. At 91–109 the chain is on the extracellular side; that stretch reads VYASDKDWIRFDQSNILCS. A disulfide bond links C108 and C186. Residues 110 to 131 traverse the membrane as a helical segment; it reads VFGISMVFSGLCPLFLGSTMAI. Over 132–152 the chain is Cytoplasmic; sequence ERCIGVTNPLFHSTKITSKHV. A helical transmembrane segment spans residues 153-175; sequence KMILSGVCMFAVFVALLPILGHR. Residues 176–198 lie on the Extracellular side of the membrane; that stretch reads DYQIQASRTWCFYNTEHIEDWED. Residues 199–224 form a helical membrane-spanning segment; the sequence is RFYLLFFSSLGLLALGISFSCNAVTG. The Cytoplasmic segment spans residues 225–250; that stretch reads VTLLRVKFRSQQHRQGRSHHLEMVIQ. The helical transmembrane segment at 251–267 threads the bilayer; that stretch reads LLAIMCVSCVCWSPFLV. Topologically, residues 268-285 are extracellular; it reads TMANIAINGNNSPVTCET. The helical transmembrane segment at 286–307 threads the bilayer; it reads TLFALRMATWNQILDPWVYILL. The Cytoplasmic segment spans residues 308-366; it reads RKAVLRNLYKLASRCCGVNIISLHIWELSSIKNSLKVAAISESPAAEKENQQASSEAGL.

Belongs to the G-protein coupled receptor 1 family. In terms of tissue distribution, highest expression in pregnant ovary. Also found in a low extent in the kidney. In the brain, expressed in astrocytes and oligodendrocytes, and meningeal fibroblasts, but not in migroglia cells.

It is found in the cell membrane. In terms of biological role, receptor for prostaglandin F2-alpha (PGF2-alpha). The activity of this receptor is mediated by G proteins which activate a phosphatidylinositol-calcium second messenger system. Initiates luteolysis in the corpus luteum. This is Prostaglandin F2-alpha receptor (Ptgfr) from Rattus norvegicus (Rat).